The primary structure comprises 251 residues: Insulin-induced gene 1 protein (251 aa).

The Cytoplasmic portion of the chain corresponds to 1 to 58; it reads MQTLEEHCWSCSCTRGRDKKGTRLSTWLAQRAAKAMSSLNSLLSLAYHTLASSEGRSL. The helical transmembrane segment at 59–81 threads the bilayer; the sequence is IRRSLVLFAVGVFLALVLNLLQI. Residues 82 to 100 lie on the Extracellular side of the membrane; that stretch reads QRNVTLFPEEVIATIFSSA. The chain crosses the membrane as a helical span at residues 101–118; sequence WWVPPCCGTAAAVVGLLY. Residues 119–133 lie on the Cytoplasmic side of the membrane; that stretch reads PCIDSHLGEPHKFKR. A helical membrane pass occupies residues 134–156; sequence EWASVMRCIAVFVGINHASAKLD. At 157–159 the chain is on the extracellular side; it reads FAN. A helical transmembrane segment spans residues 160–178; it reads NVQLSLTLAALSLGLWWTF. The Cytoplasmic portion of the chain corresponds to 179 to 183; sequence DRSRS. Residues 184–205 form a helical membrane-spanning segment; the sequence is GLGLGITIAFLATLITQFLVYN. Residues 206-219 lie on the Extracellular side of the membrane; the sequence is GVYQYTSPDFLYIR. The helical transmembrane segment at 220 to 237 threads the bilayer; the sequence is SWLPCIFFSGGVTVGNIG. Residues 238–251 lie on the Cytoplasmic side of the membrane; sequence RQLAMGSSEKTHSD. Positions 245–251 match the KxHxx motif; that stretch reads SEKTHSD.

It belongs to the INSIG family. In terms of assembly, interacts with scap; interaction is direct and only takes place in the presence of sterols; it prevents interaction between scap and the coat protein complex II (COPII). Associates with the SCAP-SREBP complex; association is mediated via its interaction with scap and only takes place in the presence of sterols.

The protein resides in the endoplasmic reticulum membrane. Functionally, oxysterol-binding protein that mediates feedback control of cholesterol synthesis by controlling both endoplasmic reticulum to Golgi transport of scap and degradation of hmgcr. Acts as a negative regulator of cholesterol biosynthesis by mediating the retention of the SCAP-SREBP complex in the endoplasmic reticulum, thereby blocking the processing of sterol regulatory element-binding proteins (SREBPs). Binds oxysterol, including 25-hydroxycholesterol, regulating interaction with scap and retention of the SCAP-SREBP complex in the endoplasmic reticulum. In presence of oxysterol, interacts with scap, retaining the SCAP-SREBP complex in the endoplasmic reticulum, thereby preventing scap from escorting SREBPs to the Golgi. Sterol deprivation reduces oxysterol-binding, disrupting the interaction between insig1 and scap, thereby promoting Golgi transport of the SCAP-SREBP complex, followed by processing and nuclear translocation of SREBPs. Also regulates cholesterol synthesis by regulating degradation of hmgcr. This Xenopus tropicalis (Western clawed frog) protein is Insulin-induced gene 1 protein.